The sequence spans 217 residues: Cytochrome b5 domain-containing protein 1 (217 aa).

A Cytochrome b5 heme-binding domain is found at 6–72 (PRYFTPREVS…NPKTGDVKTH (67 aa)). Heme-binding residues include His41 and His72.

Belongs to the cytochrome b5 family.

The protein resides in the cytoplasm. The protein localises to the cytoskeleton. It is found in the cilium axoneme. Its function is as follows. Radial spoke stalk protein that binds heme under oxidizing conditions. Required for the coordinated beating of multiple cilia maybe by functioning in a redox signaling pathway. This Xenopus laevis (African clawed frog) protein is Cytochrome b5 domain-containing protein 1 (cyb5d1).